The chain runs to 128 residues: Protein C10 (128 aa).

Belongs to the UPF0456 family.

Its subcellular location is the cytoplasm. This chain is Protein C10, found in Xenopus laevis (African clawed frog).